A 92-amino-acid chain; its full sequence is Small ribosomal subunit protein uS19c (92 aa).

Belongs to the universal ribosomal protein uS19 family.

The protein localises to the plastid. The protein resides in the chloroplast. Protein S19 forms a complex with S13 that binds strongly to the 16S ribosomal RNA. This Phalaenopsis aphrodite subsp. formosana (Moth orchid) protein is Small ribosomal subunit protein uS19c.